The primary structure comprises 570 residues: Sulfite reductase [NADPH] hemoprotein beta-component (570 aa).

Residues Cys-434, Cys-440, Cys-479, and Cys-483 each contribute to the [4Fe-4S] cluster site. Cys-483 contributes to the siroheme binding site.

Belongs to the nitrite and sulfite reductase 4Fe-4S domain family. In terms of assembly, alpha(8)-beta(8). The alpha component is a flavoprotein, the beta component is a hemoprotein. It depends on siroheme as a cofactor. The cofactor is [4Fe-4S] cluster.

The catalysed reaction is hydrogen sulfide + 3 NADP(+) + 3 H2O = sulfite + 3 NADPH + 4 H(+). Its pathway is sulfur metabolism; hydrogen sulfide biosynthesis; hydrogen sulfide from sulfite (NADPH route): step 1/1. Functionally, component of the sulfite reductase complex that catalyzes the 6-electron reduction of sulfite to sulfide. This is one of several activities required for the biosynthesis of L-cysteine from sulfate. The sequence is that of Sulfite reductase [NADPH] hemoprotein beta-component from Shigella flexneri.